Reading from the N-terminus, the 156-residue chain is Ribosome maturation factor RimP (156 aa).

The protein belongs to the RimP family.

The protein localises to the cytoplasm. In terms of biological role, required for maturation of 30S ribosomal subunits. In Lachnospira eligens (strain ATCC 27750 / DSM 3376 / VPI C15-48 / C15-B4) (Eubacterium eligens), this protein is Ribosome maturation factor RimP.